The sequence spans 365 residues: Probable L-tyrosine/L-aspartate decarboxylase (365 aa).

K224 bears the N6-(pyridoxal phosphate)lysine mark.

It belongs to the group II decarboxylase family. MfnA subfamily. Requires pyridoxal 5'-phosphate as cofactor.

It carries out the reaction L-tyrosine + H(+) = tyramine + CO2. It catalyses the reaction L-aspartate + H(+) = beta-alanine + CO2. Its pathway is cofactor biosynthesis; methanofuran biosynthesis. It participates in cofactor biosynthesis; coenzyme A biosynthesis. Functionally, catalyzes the decarboxylation of L-tyrosine to produce tyramine for methanofuran biosynthesis. Can also catalyze the decarboxylation of L-aspartate to produce beta-alanine for coenzyme A (CoA) biosynthesis. The chain is Probable L-tyrosine/L-aspartate decarboxylase from Methanoregula boonei (strain DSM 21154 / JCM 14090 / 6A8).